The primary structure comprises 706 residues: Polyribonucleotide nucleotidyltransferase (706 aa).

Residues Asp487 and Asp493 each contribute to the Mg(2+) site. A KH domain is found at 553 to 612 (PRLFTMKISQDKIRDVIGKGGETIRSITAETGTEINIAEDGTITIAATTQEAGDAAKKRI). The 71-residue stretch at 622–692 (GKVYEGTVVK…DRGRVRLSIK (71 aa)) folds into the S1 motif domain.

The protein belongs to the polyribonucleotide nucleotidyltransferase family. Requires Mg(2+) as cofactor.

The protein resides in the cytoplasm. The enzyme catalyses RNA(n+1) + phosphate = RNA(n) + a ribonucleoside 5'-diphosphate. Functionally, involved in mRNA degradation. Catalyzes the phosphorolysis of single-stranded polyribonucleotides processively in the 3'- to 5'-direction. The sequence is that of Polyribonucleotide nucleotidyltransferase from Neisseria gonorrhoeae (strain ATCC 700825 / FA 1090).